A 291-amino-acid chain; its full sequence is 4-hydroxy-tetrahydrodipicolinate synthase (291 aa).

Threonine 47 contributes to the pyruvate binding site. The Proton donor/acceptor role is filled by tyrosine 136. Lysine 164 serves as the catalytic Schiff-base intermediate with substrate. Isoleucine 206 serves as a coordination point for pyruvate.

This sequence belongs to the DapA family. Homotetramer; dimer of dimers.

It localises to the cytoplasm. It carries out the reaction L-aspartate 4-semialdehyde + pyruvate = (2S,4S)-4-hydroxy-2,3,4,5-tetrahydrodipicolinate + H2O + H(+). It functions in the pathway amino-acid biosynthesis; L-lysine biosynthesis via DAP pathway; (S)-tetrahydrodipicolinate from L-aspartate: step 3/4. Catalyzes the condensation of (S)-aspartate-beta-semialdehyde [(S)-ASA] and pyruvate to 4-hydroxy-tetrahydrodipicolinate (HTPA). In Leuconostoc citreum (strain KM20), this protein is 4-hydroxy-tetrahydrodipicolinate synthase.